The following is a 301-amino-acid chain: Probable alpha-L-glutamate ligase (301 aa).

The ATP-grasp domain maps to 104-287 (LQLLARKGIG…VATKVIEFIE (184 aa)). ATP contacts are provided by residues Lys-141, 178–179 (EF), Asp-187, and 211–213 (RSN). Asp-248, Glu-260, and Asn-262 together coordinate Mg(2+). Mn(2+) is bound by residues Asp-248, Glu-260, and Asn-262.

This sequence belongs to the RimK family. It depends on Mg(2+) as a cofactor. Mn(2+) is required as a cofactor.

This is Probable alpha-L-glutamate ligase from Nitrosococcus oceani (strain ATCC 19707 / BCRC 17464 / JCM 30415 / NCIMB 11848 / C-107).